The chain runs to 137 residues: Nucleoside diphosphate kinase (137 aa).

ATP is bound by residues Lys10, Phe58, Arg86, Thr92, Arg103, and Asn113. His116 serves as the catalytic Pros-phosphohistidine intermediate.

The protein belongs to the NDK family. As to quaternary structure, homotetramer. Mg(2+) is required as a cofactor.

The protein localises to the cytoplasm. It carries out the reaction a 2'-deoxyribonucleoside 5'-diphosphate + ATP = a 2'-deoxyribonucleoside 5'-triphosphate + ADP. The enzyme catalyses a ribonucleoside 5'-diphosphate + ATP = a ribonucleoside 5'-triphosphate + ADP. In terms of biological role, major role in the synthesis of nucleoside triphosphates other than ATP. The ATP gamma phosphate is transferred to the NDP beta phosphate via a ping-pong mechanism, using a phosphorylated active-site intermediate. The chain is Nucleoside diphosphate kinase from Helicobacter pylori (strain G27).